The primary structure comprises 160 residues: Transcriptional repressor NrdR (160 aa).

Residues 1–11 (MRCPSCSSLDT) show a composition bias toward polar residues. The interval 1 to 20 (MRCPSCSSLDTQVKDSRPTE) is disordered. Residues 3 to 34 (CPSCSSLDTQVKDSRPTEDSSVIRRRRVCLAC) fold into a zinc finger. Positions 49-139 (LTVIKRNGRR…VYRNFREAKD (91 aa)) constitute an ATP-cone domain.

Belongs to the NrdR family. The cofactor is Zn(2+).

In terms of biological role, negatively regulates transcription of bacterial ribonucleotide reductase nrd genes and operons by binding to NrdR-boxes. The polypeptide is Transcriptional repressor NrdR (Rhodopseudomonas palustris (strain BisA53)).